Reading from the N-terminus, the 420-residue chain is Xyloglucan O-acetyltransferase 4 (420 aa).

At 1 to 30 (MTMHEKMKLPSCSCSAFKCGKKDRWLNMER) the chain is on the cytoplasmic side. A helical; Signal-anchor for type II membrane protein transmembrane segment spans residues 31–51 (PIPFLLIGLTTILSVFILYTL). The Lumenal segment spans residues 52-420 (NPLKFVIEHN…LLLAVLRRLD (369 aa)). 4 cysteine pairs are disulfide-bonded: cysteine 78–cysteine 128, cysteine 99–cysteine 164, cysteine 108–cysteine 400, and cysteine 323–cysteine 396. Asparagine 96 is a glycosylation site (N-linked (GlcNAc...) asparagine). The GDS motif signature appears at 151-153 (GDS). Serine 153 (nucleophile) is an active-site residue. Residues asparagine 192, asparagine 212, asparagine 270, and asparagine 324 are each glycosylated (N-linked (GlcNAc...) asparagine). Catalysis depends on aspartate 395, which acts as the Proton donor. Positions 395–398 (DCVH) match the DXXH motif motif. Histidine 398 serves as the catalytic Proton acceptor.

This sequence belongs to the PC-esterase family. TBL subfamily.

It is found in the golgi apparatus membrane. Its function is as follows. Xyloglucan acetyltransferase that catalyzes the acetylation of fucosylated Gal residues on xyloglucan side chains. Predominantly catalyze 6-O-monoacetylation of Gal residues in the Fuc-Gal-Xyl trisaccharide side chains of xyloglucan oligomers. This is Xyloglucan O-acetyltransferase 4 from Populus trichocarpa (Western balsam poplar).